Here is a 3674-residue protein sequence, read N- to C-terminus: Spectrin beta chain, non-erythrocytic 5 (3674 aa).

Residues 1–37 are disordered; the sequence is MAGQPHSPRELLGAAGHRSRRPSTELRVPPSPSLTMD. Positions 1–279 are actin-binding; the sequence is MAGQPHSPRE…IMTYVSLYYH (279 aa). Calponin-homology (CH) domains follow at residues 54–159 and 177–282; these read QMQE…LRFQ and LSTK…HYCS. Spectrin repeat units follow at residues 307–416, 428–529, 642–742, 747–810, 900–996, 1103–1206, 1209–1311, and 1315–1417; these read LQTQ…ALQQ, ARRF…RKQV, AEFL…ARLQ, VLQY…QGRA, GFCS…AVQL, ARQS…WLQE, ELQK…RQLL, and QLQE…ELQQ. The tract at residues 1441-1469 is disordered; that stretch reads ALQSSETGQDLRSSQRLQKRHQQLESESR. Positions 1442 to 1456 are enriched in polar residues; that stretch reads LQSSETGQDLRSSQR. 19 Spectrin repeats span residues 1521 to 1624, 1628 to 1727, 1731 to 1835, 1842 to 1940, 1944 to 2046, 2052 to 2146, 2150 to 2253, 2256 to 2361, 2366 to 2467, 2471 to 2574, 2577 to 2680, 2683 to 2784, 2791 to 2890, 2894 to 2997, 3000 to 3103, 3106 to 3209, 3213 to 3311, 3318 to 3415, and 3422 to 3488; these read ELHQ…CLQQ, FQQY…RELE, RLHE…ALRD, VHRD…AQLE, LLAR…ERLQ, QLFL…HALH, LMAS…ELED, NFLE…QQLE, IHVL…EALD, QAQK…QLQQ, ELQL…RLEE, QLQA…AKLQ, RLRR…TALE, LLLK…LLQQ, EAQQ…GLQE, QLHQ…ENLA, EVHS…QWLA, AFLG…RWQR, and LQKL…EQEL. One can recognise a PH domain in the interval 3533–3641; that stretch reads TPTMEGSLEF…WWRALGSTAA (109 aa).

Belongs to the spectrin family. In terms of assembly, probably associates with an alpha chain. Interacts (via C-terminus) with TRPC4. As to expression, expressed at very low levels in many tissues, with strongest expression in cerebellum, spinal cord, stomach, pituitary gland, liver, pancreas, salivary gland, kidney, bladder, and heart.

The protein resides in the cytoplasm. The protein localises to the cytoskeleton. This is Spectrin beta chain, non-erythrocytic 5 (SPTBN5) from Homo sapiens (Human).